The following is a 330-amino-acid chain: Solute-binding protein NAS141_03721 (330 aa).

The N-terminal stretch at 1-27 is a signal peptide; that stretch reads MSFFTKTAQLVSGAAVAATLFTATAQA. Residues E75, N97, R153, R173, Y196, 213 to 214, and R240 each bind alpha-D-mannuronate; that span reads NE. Alpha-D-taluronate-binding positions include E75, N97, R153, R173, Y196, 213–214, and R240; that span reads NE.

Belongs to the bacterial solute-binding protein 7 family. In terms of assembly, the complex is comprised of an extracytoplasmic solute-binding protein and a heteromeric permease formed by two transmembrane proteins.

The protein localises to the periplasm. In terms of biological role, solute-binding protein that binds D-mannuronate and D-taluronate (in vitro). Probably part of a tripartite ATP-independent periplasmic (TRAP) transport system that mediates solute transport into the cytoplasm. In Sulfitobacter sp. (strain NAS-14.1), this protein is Solute-binding protein NAS141_03721.